The following is a 343-amino-acid chain: Heat-inducible transcription repressor HrcA (343 aa).

It belongs to the HrcA family.

Its function is as follows. Negative regulator of class I heat shock genes (grpE-dnaK-dnaJ and groELS operons). Prevents heat-shock induction of these operons. The sequence is that of Heat-inducible transcription repressor HrcA from Bacillus licheniformis (strain ATCC 14580 / DSM 13 / JCM 2505 / CCUG 7422 / NBRC 12200 / NCIMB 9375 / NCTC 10341 / NRRL NRS-1264 / Gibson 46).